The chain runs to 168 residues: Transcriptional regulator MraZ (168 aa).

2 consecutive SpoVT-AbrB domains span residues 8-51 (EYNQ…GGDR) and 90-140 (ALNM…KADT).

This sequence belongs to the MraZ family. Forms oligomers.

It is found in the cytoplasm. The protein resides in the nucleoid. In Cereibacter sphaeroides (strain ATCC 17029 / ATH 2.4.9) (Rhodobacter sphaeroides), this protein is Transcriptional regulator MraZ.